The chain runs to 114 residues: Hemerythrin subunit 1 (114 aa).

Histidine 26, histidine 55, glutamate 59, histidine 74, histidine 78, histidine 102, and aspartate 107 together coordinate Fe cation.

It belongs to the hemerythrin family.

Its function is as follows. Hemerythrin is a respiratory protein in blood cells of certain marine worms. The oxygen-binding site in each chain contains two iron atoms. This is Hemerythrin subunit 1 from Golfingia vulgaris (Marine worm).